A 308-amino-acid chain; its full sequence is N-acetylneuraminate lyase (308 aa).

Aceneuramate-binding residues include Thr50 and Thr51. Tyr142 acts as the Proton donor in catalysis. Residue Lys172 is the Schiff-base intermediate with substrate of the active site. Positions 174, 198, 200, 201, and 217 each coordinate aceneuramate.

This sequence belongs to the DapA family. NanA subfamily. Homotetramer.

It is found in the cytoplasm. It carries out the reaction aceneuramate = aldehydo-N-acetyl-D-mannosamine + pyruvate. Its pathway is amino-sugar metabolism; N-acetylneuraminate degradation. Its function is as follows. Catalyzes the cleavage of N-acetylneuraminic acid (sialic acid) to form pyruvate and N-acetylmannosamine via a Schiff base intermediate. It prevents sialic acids from being recycled and returning to the cell surface. Involved in the N-glycolylneuraminic acid (Neu5Gc) degradation pathway. This is N-acetylneuraminate lyase from Gallus gallus (Chicken).